Reading from the N-terminus, the 544-residue chain is Chaperonin GroEL (544 aa).

ATP-binding positions include threonine 30 to proline 33, lysine 51, aspartate 87 to threonine 91, glycine 415, asparagine 478 to alanine 480, and aspartate 494.

Belongs to the chaperonin (HSP60) family. Forms a cylinder of 14 subunits composed of two heptameric rings stacked back-to-back. Interacts with the co-chaperonin GroES.

It localises to the cytoplasm. The enzyme catalyses ATP + H2O + a folded polypeptide = ADP + phosphate + an unfolded polypeptide.. Together with its co-chaperonin GroES, plays an essential role in assisting protein folding. The GroEL-GroES system forms a nano-cage that allows encapsulation of the non-native substrate proteins and provides a physical environment optimized to promote and accelerate protein folding. The sequence is that of Chaperonin GroEL from Geobacter sulfurreducens (strain ATCC 51573 / DSM 12127 / PCA).